Here is a 410-residue protein sequence, read N- to C-terminus: Transcription factor rglT (410 aa).

The disordered stretch occupies residues 1-24 (MQFDSLPLPPSSSHDTTSVPPLKR). A DNA-binding region (zn(2)-C6 fungal-type) is located at residues 28 to 55 (CDECRKRKLKCSGEATGCSRCLKQSLPC). Residues 353–372 (HRTRTVESPNEPGSCSPVSH) are disordered. Residues 358–369 (VESPNEPGSCSP) show a composition bias toward polar residues.

The protein resides in the nucleus. Transcription factor that is involved in protection against oxidative stress. Binds to promoter regions of the gliotoxin (GT) biosynthetic genes gliZ, gliF, gliT, gliM, gliA and gtmA. Two related but different DNA motifs (5'-TCGG-3' and 5'-CGGNCGG-3') are specifically enriched among rglT binding sites in GT-inducing conditions. Also indirectly regulates the expression of gliP, gliG, gliH and gliN. Plays a key role in resistance against exogenously-added GT and GT biosynthesis, mainly through the direct regulation of gliT. Furthermore, rglT is important for virulence in chemotherapeutic mice with invasive pulmonary aspergillosis (IPA). The polypeptide is Transcription factor rglT (Aspergillus fumigatus (strain CBS 144.89 / FGSC A1163 / CEA10) (Neosartorya fumigata)).